Consider the following 77-residue polypeptide: Structural DNA-binding protein p10 (77 aa).

The span at 1 to 12 shows a compositional bias: polar residues; it reads MPTKAGTKSTAN. The interval 1–38 is disordered; the sequence is MPTKAGTKSTANKKTTKGPSKSGSAKGHTGKTHATALH. Positions 17–27 are enriched in low complexity; that stretch reads KGPSKSGSAKG.

Belongs to the asfivirus P10 family.

The protein resides in the virion. Its function is as follows. May play a role in genome packaging through direct interaction with viral DNA. Binds to ssDNA and dsDNA with the same apparent affinity in vitro. The sequence is that of Structural DNA-binding protein p10 from Ornithodoros (relapsing fever ticks).